A 248-amino-acid polypeptide reads, in one-letter code: Tropomyosin alpha-4 chain (248 aa).

Position 2 is an N-acetylalanine (alanine 2). Positions 2–248 (AGLNSLEAVK…DQTLNELNCI (247 aa)) form a coiled coil. Serine 6 carries the post-translational modification Phosphoserine. A disordered region spans residues 15-47 (QALQQQADEAEDRAQGLQRELDGERERREKAEG). A compositionally biased stretch (basic and acidic residues) spans 33–47 (RELDGERERREKAEG). 2 positions are modified to N6-acetyllysine: lysine 177 and lysine 215. Residue threonine 216 is modified to Phosphothreonine.

The protein belongs to the tropomyosin family. As to quaternary structure, homodimer. Heterodimer of an alpha (TPM1, TPM3 or TPM4) and a beta (TPM2) chain. In terms of tissue distribution, detected in cardiac tissue and platelets, the form found in cardiac tissue is a higher molecular weight than the form found in platelets. Expressed at higher levels in the platelets of hypertensive patients with cardiac hypertrophy than in the platelets of hypertensive patients without cardiac hypertrophy (at protein level).

It localises to the cytoplasm. Its subcellular location is the cytoskeleton. In terms of biological role, binds to actin filaments in muscle and non-muscle cells. Plays a central role, in association with the troponin complex, in the calcium dependent regulation of vertebrate striated muscle contraction. Smooth muscle contraction is regulated by interaction with caldesmon. In non-muscle cells is implicated in stabilizing cytoskeleton actin filaments. Binds calcium. Plays a role in platelet biogenesis. In Homo sapiens (Human), this protein is Tropomyosin alpha-4 chain (TPM4).